A 258-amino-acid polypeptide reads, in one-letter code: MAPITDEVVNGLKDTIGKLEARVEELEGRLSNQVKPKSVAEQMRIILMGPPGAGKGTQAPRLKEKYCVCHLATGDMLRSQVAKKTALGKEAKKIMDQGGLVSDEIMVNMIQSELDNNAECKNGFILDGFPRTVAQAERLDDMLNARQQKLQHAVELQIDDALLVARITGRLVHPASGRSYHKIFNPPKEEMKDDVTGEPLIQRSDDNADTLKKRLGTYHAQTAPVVEYYKKTGIWRGIDASQEPGQVWKSLLGVFRQN.

52–57 contributes to the ATP binding site; the sequence is GAGKGT. Positions 72–101 are NMP; that stretch reads ATGDMLRSQVAKKTALGKEAKKIMDQGGLV. AMP-binding positions include Thr73, Arg78, 99–101, 128–131, and Gln135; these read GLV and GFPR. The LID stretch occupies residues 169-206; that stretch reads GRLVHPASGRSYHKIFNPPKEEMKDDVTGEPLIQRSDD. ATP is bound by residues Arg170 and 179 to 180; that span reads SY. AMP-binding residues include Arg203 and Arg214. Gln242 serves as a coordination point for ATP.

It belongs to the adenylate kinase family. AK2 subfamily. Monomer.

The protein localises to the cytoplasm. It is found in the cytosol. The protein resides in the mitochondrion intermembrane space. The enzyme catalyses AMP + ATP = 2 ADP. In terms of biological role, catalyzes the reversible transfer of the terminal phosphate group between ATP and AMP. Plays an important role in cellular energy homeostasis and in adenine nucleotide metabolism. Adenylate kinase activity is critical for regulation of the phosphate utilization and the AMP de novo biosynthesis pathways. This Aspergillus niger (strain ATCC MYA-4892 / CBS 513.88 / FGSC A1513) protein is Adenylate kinase (adk1).